Here is a 110-residue protein sequence, read N- to C-terminus: Large ribosomal subunit protein uL22 (110 aa).

The protein belongs to the universal ribosomal protein uL22 family. In terms of assembly, part of the 50S ribosomal subunit.

Its function is as follows. This protein binds specifically to 23S rRNA; its binding is stimulated by other ribosomal proteins, e.g. L4, L17, and L20. It is important during the early stages of 50S assembly. It makes multiple contacts with different domains of the 23S rRNA in the assembled 50S subunit and ribosome. In terms of biological role, the globular domain of the protein is located near the polypeptide exit tunnel on the outside of the subunit, while an extended beta-hairpin is found that lines the wall of the exit tunnel in the center of the 70S ribosome. This Shewanella halifaxensis (strain HAW-EB4) protein is Large ribosomal subunit protein uL22.